Reading from the N-terminus, the 4042-residue chain is Polyketide synthase-nonribosomal peptide synthetase phmA (4042 aa).

The 402-residue stretch at 10–411 folds into the Ketosynthase family 3 (KS3) domain; that stretch reads NEPIAIVGSA…GANAHAILEA (402 aa). The interval 519–837 is acyl transferase; it reads VFTGQGAQWA…TGLLSRDRDD (319 aa). Positions 909–1042 are N-terminal hotdog fold; sequence HELLGTKCPD…GRISALFGPP (134 aa). The tract at residues 909 to 1208 is dehydratase (DH) domain; sequence HELLGTKCPD…LHTKPLGHAT (300 aa). In terms of domain architecture, PKS/mFAS DH spans 909-1210; the sequence is HELLGTKCPD…TKPLGHATPE (302 aa). H941 functions as the Proton acceptor; for dehydratase activity in the catalytic mechanism. A C-terminal hotdog fold region spans residues 1057–1210; it reads MIDVDPEQFY…TKPLGHATPE (154 aa). Catalysis depends on D1117, which acts as the Proton donor; for dehydratase activity. The segment at 1349 to 1572 is methyltransferase (MT) domain; the sequence is DDMLNDFYVK…VDEHVEFIRN (224 aa). A ketoreductase (KR)domain region spans residues 2073–2246; it reads TYWLVGLTGG…AGSVINIGAI (174 aa). In terms of domain architecture, Carrier 1 spans 2351–2433; sequence ATTADEVNEA…ELVSAAQEQL (83 aa). S2393 bears the O-(pantetheine 4'-phosphoryl)serine mark. Disordered regions lie at residues 2460 to 2504 and 2535 to 2554; these read KTET…SKDA and ATRS…PEND. Positions 2479–2490 are enriched in acidic residues; it reads EVDEEEQEEDEA. The segment covering 2495 to 2504 has biased composition (polar residues); that stretch reads NFFSSASKDA. The segment covering 2536-2549 has biased composition (low complexity); that stretch reads TRSKTSSSSSSFTS. The segment at 2584 to 3019 is condensation; it reads RVSPMSFGQA…LGRPPLYDPQ (436 aa). Residues 3047–3443 are adenylation; that stretch reads EMASRFGSQI…TADGLVLEGR (397 aa). Residues 3562–3642 enclose the Carrier 2 domain; the sequence is KENKSPESEL…AMLNLISPAS (81 aa). S3602 bears the O-(pantetheine 4'-phosphoryl)serine mark. A reductase-like region spans residues 3703–3924; sequence ITGASGFLGK…DFVSVESVAH (222 aa).

It belongs to the NRP synthetase family.

It participates in mycotoxin biosynthesis. Functionally, hybrid PKS-NRPS synthetase; part of the gene cluster that mediates the biosynthesis of the mycotoxins phomacins, leucine-derived cytochalasans with potent actin polymerization-inhibitory activities and monocot-specific antigerminative activities. The first step in the pathway is catalyzed by the hybrid PKS-NRPS phmA, assisted by the enoyl reductase phmE, that are responsible for fusion of the leucine precursor and the polyketide backbone to produce a 2-pyrrolidone intermediate. The polyketide synthase module (PKS) of phmA is responsible for the synthesis of the polyketide backbone and the downstream nonribosomal peptide synthetase (NRPS) amidates the carboxyl end of the polyketide with the leucine precursor. Because phmA lacks a designated enoylreductase (ER) domain, the required activity is provided the enoyl reductase phmE. Reduction by the hydrolyase phmG, followed by dehydration and intra-molecular Diels-Alder cyclization by the Diels-Alderase phmD then yield the required isoindolone-fused macrocycle. A number of oxidative steps catalyzed by the tailoring cytochrome P450 monooxygenase phmB, the FAD-linked oxidoreductase phmC and the short-chain dehydrogenase/reductase phmF, are further required to afford the final products, phomacin D and phomacin E. The polypeptide is Polyketide synthase-nonribosomal peptide synthetase phmA (Phaeosphaeria nodorum (strain SN15 / ATCC MYA-4574 / FGSC 10173) (Glume blotch fungus)).